The primary structure comprises 244 residues: tRNA pseudouridine synthase A (244 aa).

Residue Asp52 is the Nucleophile of the active site. Tyr110 is a binding site for substrate.

It belongs to the tRNA pseudouridine synthase TruA family. In terms of assembly, homodimer.

The catalysed reaction is uridine(38/39/40) in tRNA = pseudouridine(38/39/40) in tRNA. Functionally, formation of pseudouridine at positions 38, 39 and 40 in the anticodon stem and loop of transfer RNAs. The protein is tRNA pseudouridine synthase A of Acetivibrio thermocellus (strain ATCC 27405 / DSM 1237 / JCM 9322 / NBRC 103400 / NCIMB 10682 / NRRL B-4536 / VPI 7372) (Clostridium thermocellum).